Reading from the N-terminus, the 122-residue chain is MGYRKLGRTSDQRKAMLRDLATSLIVSERIETTEARAKEVRSVVEKLITLGKKGDLASRRNAAKTLRNVEILNEDDSTQTALQKLFGEIAERYSERQGGYTRILKVGPRRGDGAESVIIELV.

Belongs to the bacterial ribosomal protein bL17 family. As to quaternary structure, part of the 50S ribosomal subunit. Contacts protein L32.

The sequence is that of Large ribosomal subunit protein bL17 from Staphylococcus epidermidis (strain ATCC 35984 / DSM 28319 / BCRC 17069 / CCUG 31568 / BM 3577 / RP62A).